The primary structure comprises 106 residues: Small ribosomal subunit protein uS10 (106 aa).

Belongs to the universal ribosomal protein uS10 family. In terms of assembly, part of the 30S ribosomal subunit.

In terms of biological role, involved in the binding of tRNA to the ribosomes. This chain is Small ribosomal subunit protein uS10, found in Mycoplasma genitalium (strain ATCC 33530 / DSM 19775 / NCTC 10195 / G37) (Mycoplasmoides genitalium).